The following is a 513-amino-acid chain: Lysine--tRNA ligase (513 aa).

Polar residues predominate over residues Met1 to Gln11. Positions Met1–Lys22 are disordered. Positions 423 and 430 each coordinate Mg(2+).

The protein belongs to the class-II aminoacyl-tRNA synthetase family. As to quaternary structure, homodimer. Mg(2+) serves as cofactor.

It localises to the cytoplasm. It catalyses the reaction tRNA(Lys) + L-lysine + ATP = L-lysyl-tRNA(Lys) + AMP + diphosphate. The sequence is that of Lysine--tRNA ligase from Paraburkholderia xenovorans (strain LB400).